The following is a 397-amino-acid chain: Yellow-related salivary protein LJM111 (397 aa).

The first 18 residues, methionine 1–glycine 18, serve as a signal peptide directing secretion.

The protein belongs to the major royal jelly protein family. As to expression, salivary gland (at protein level).

It localises to the secreted. Probably modulates blood feeding of sand flies on vertebrate species by binding and sequestering different mediators involved in the host response. Binds biogenic amines. Binds adrenaline and noradrenaline with high affinity. Binds serotonin. Binds dopamine and octopamine. Exhibits anti-inflammatory effects in the host: reduces IL17A, TNF-alpha (TNF) and IFN-gamma (IFNG) production by host lymph node cells, suppresses expression of MHC-II and CD86, reduces TNF-alpha production and increases IL10 production, in host bone marrow-derived dendritic cells (BMDCs) stimulated by lipopolysaccharides. Reduces pain in mouse mechanical hypernociception model. This Lutzomyia longipalpis (Sand fly) protein is Yellow-related salivary protein LJM111.